An 80-amino-acid chain; its full sequence is MAKADIHPKWYPDAKVYCNGQVVMTIGSTKPELHVDVWSGNHPFYTGTQKIIDTEGRVERFLRKYGMSSTQTSGDEQTKK.

The protein belongs to the bacterial ribosomal protein bL31 family. Type A subfamily. As to quaternary structure, part of the 50S ribosomal subunit.

Its function is as follows. Binds the 23S rRNA. This is Large ribosomal subunit protein bL31 from Nostoc punctiforme (strain ATCC 29133 / PCC 73102).